A 21-amino-acid chain; its full sequence is Nigrocin-2 (21 aa).

An intrachain disulfide couples cysteine 15 to cysteine 21.

Expressed by the skin dorsal glands.

It is found in the secreted. In terms of biological role, thanks to its single linear amphipathic alpha-helix, may integrate into membrane phospholipids, leading to lysis of the membrane. Shows antibacterial activity against both Gram-positive and Gram-negative bacteria and against the fungus C.albicans. Has no hemolytic activity. The polypeptide is Nigrocin-2 (Pelophylax nigromaculatus (Black-spotted frog)).